We begin with the raw amino-acid sequence, 318 residues long: Acetyl-coenzyme A carboxylase carboxyl transferase subunit alpha (318 aa).

A CoA carboxyltransferase C-terminal domain is found at 38–292 (KLEKRLAKLE…NKTITKSLHA (255 aa)).

The protein belongs to the AccA family. As to quaternary structure, acetyl-CoA carboxylase is a heterohexamer composed of biotin carboxyl carrier protein (AccB), biotin carboxylase (AccC) and two subunits each of ACCase subunit alpha (AccA) and ACCase subunit beta (AccD).

Its subcellular location is the cytoplasm. The enzyme catalyses N(6)-carboxybiotinyl-L-lysyl-[protein] + acetyl-CoA = N(6)-biotinyl-L-lysyl-[protein] + malonyl-CoA. It participates in lipid metabolism; malonyl-CoA biosynthesis; malonyl-CoA from acetyl-CoA: step 1/1. Component of the acetyl coenzyme A carboxylase (ACC) complex. First, biotin carboxylase catalyzes the carboxylation of biotin on its carrier protein (BCCP) and then the CO(2) group is transferred by the carboxyltransferase to acetyl-CoA to form malonyl-CoA. This chain is Acetyl-coenzyme A carboxylase carboxyl transferase subunit alpha, found in Listeria welshimeri serovar 6b (strain ATCC 35897 / DSM 20650 / CCUG 15529 / CIP 8149 / NCTC 11857 / SLCC 5334 / V8).